We begin with the raw amino-acid sequence, 207 residues long: 8-oxoguanine DNA glycosylase/AP lyase (207 aa).

Catalysis depends on residues Lys-129 and Asp-147.

It belongs to the type-2 OGG1 family.

The catalysed reaction is 2'-deoxyribonucleotide-(2'-deoxyribose 5'-phosphate)-2'-deoxyribonucleotide-DNA = a 3'-end 2'-deoxyribonucleotide-(2,3-dehydro-2,3-deoxyribose 5'-phosphate)-DNA + a 5'-end 5'-phospho-2'-deoxyribonucleoside-DNA + H(+). Catalyzes the excision of an oxidatively damaged form of guanine (7,8-dihydro-8-oxoguanine = 8-oxoG) from DNA. Also cleaves the DNA backbone at apurinic/apyrimidinic sites (AP sites). Has little specificity for the base opposite oxoG. The sequence is that of 8-oxoguanine DNA glycosylase/AP lyase from Methanocaldococcus jannaschii (strain ATCC 43067 / DSM 2661 / JAL-1 / JCM 10045 / NBRC 100440) (Methanococcus jannaschii).